Here is a 393-residue protein sequence, read N- to C-terminus: PxcA-like protein (393 aa).

Helical transmembrane passes span 173–193 (FLIVLIFIPLTVQILTKNLVF), 271–291 (IVNLLADIAGLVAFVVLIIVF), 306–326 (FLALNDITKVFIFILLTDMFV), and 354–374 (VYIFIATVPVFLDSLFKLLIF).

It belongs to the CemA family. PxcL subfamily.

It localises to the cell inner membrane. Its function is as follows. Together with PxcA, contributes to transient H(+) uptake following dark to light transition. Required for H(+) influx to activate the Calvin-Benson-Bassham cycle. May also be involved in CO(2) transport. The chain is PxcA-like protein from Synechocystis sp. (strain ATCC 27184 / PCC 6803 / Kazusa).